The following is a 268-amino-acid chain: Phosphatidylglycerol--prolipoprotein diacylglyceryl transferase (268 aa).

Helical transmembrane passes span 10–30 (VALA…LIGI), 56–76 (LVFW…VLFY), 92–112 (WKGG…ALWF), 120–140 (FFEL…AGRI), 174–194 (PSQL…LWLF), 202–222 (MAVS…VEFV), and 236–256 (WLTQ…VLIW). R139 serves as a coordination point for a 1,2-diacyl-sn-glycero-3-phospho-(1'-sn-glycerol).

This sequence belongs to the Lgt family.

The protein localises to the cell inner membrane. The catalysed reaction is L-cysteinyl-[prolipoprotein] + a 1,2-diacyl-sn-glycero-3-phospho-(1'-sn-glycerol) = an S-1,2-diacyl-sn-glyceryl-L-cysteinyl-[prolipoprotein] + sn-glycerol 1-phosphate + H(+). It functions in the pathway protein modification; lipoprotein biosynthesis (diacylglyceryl transfer). Functionally, catalyzes the transfer of the diacylglyceryl group from phosphatidylglycerol to the sulfhydryl group of the N-terminal cysteine of a prolipoprotein, the first step in the formation of mature lipoproteins. The polypeptide is Phosphatidylglycerol--prolipoprotein diacylglyceryl transferase (Pseudomonas putida (strain ATCC 47054 / DSM 6125 / CFBP 8728 / NCIMB 11950 / KT2440)).